The primary structure comprises 264 residues: MAVGKNKRLTKGGKKGAKKKVVDPFSKKDWYDVKAPAMFNIRNIGKTLVTRTQGTKIASDGLKGRVFEVSLADLQNDEVAFRKFKLITEDVQGKNCLTNFHGMDLTRDKMFSMVKKWQTMIEAHVDVKTTDGYLLRLFCVGFTKKRNNQIRKTSYAQHQQVRQIRKKMMEIMTGEFQTNDLKEVVNKLIPDSIGKDIEKACQSIYPLHDVYVRKVKMLKKPKFELGKLMELHGEGGGAGKPSGDEAGAKVERADGYEPPVQESV.

A disordered region spans residues G233–V264. The segment covering S242 to G255 has biased composition (basic and acidic residues).

This sequence belongs to the eukaryotic ribosomal protein eS1 family. In terms of assembly, component of the small ribosomal subunit. Mature ribosomes consist of a small (40S) and a large (60S) subunit. The 40S subunit contains about 33 different proteins and 1 molecule of RNA (18S). The 60S subunit contains about 49 different proteins and 3 molecules of RNA (25S, 5.8S and 5S).

The protein localises to the cytoplasm. The protein is Small ribosomal subunit protein eS1 of Eimeria tenella (Coccidian parasite).